Here is a 323-residue protein sequence, read N- to C-terminus: Ferrochelatase (323 aa).

2 residues coordinate Fe cation: histidine 196 and glutamate 277.

Belongs to the ferrochelatase family.

Its subcellular location is the cytoplasm. The enzyme catalyses heme b + 2 H(+) = protoporphyrin IX + Fe(2+). Its pathway is porphyrin-containing compound metabolism; protoheme biosynthesis; protoheme from protoporphyrin-IX: step 1/1. Functionally, catalyzes the ferrous insertion into protoporphyrin IX. The chain is Ferrochelatase from Haemophilus influenzae (strain ATCC 51907 / DSM 11121 / KW20 / Rd).